Here is a 96-residue protein sequence, read N- to C-terminus: Co-chaperonin GroES (96 aa).

It belongs to the GroES chaperonin family. As to quaternary structure, heptamer of 7 subunits arranged in a ring. Interacts with the chaperonin GroEL.

The protein localises to the cytoplasm. Functionally, together with the chaperonin GroEL, plays an essential role in assisting protein folding. The GroEL-GroES system forms a nano-cage that allows encapsulation of the non-native substrate proteins and provides a physical environment optimized to promote and accelerate protein folding. GroES binds to the apical surface of the GroEL ring, thereby capping the opening of the GroEL channel. In Cupriavidus necator (strain ATCC 17699 / DSM 428 / KCTC 22496 / NCIMB 10442 / H16 / Stanier 337) (Ralstonia eutropha), this protein is Co-chaperonin GroES.